The primary structure comprises 57 residues: Cytochrome b-c1 complex subunit 10, mitochondrial (57 aa).

Residues 1 to 23 (MAGTSGLLNAVKPKIQTIDIQAA) lie on the Mitochondrial matrix side of the membrane. The helical transmembrane segment at 24 to 44 (AGWGIAAAAGAIWVVQPFGWI) threads the bilayer. Residues 45 to 57 (KKTFIDPPPTEEK) are Mitochondrial intermembrane-facing.

This sequence belongs to the UQCR11/QCR10 family. Component of the ubiquinol-cytochrome c oxidoreductase (cytochrome b-c1 complex, complex III, CIII), a multisubunit enzyme composed of 10 subunits. The complex is composed of 3 respiratory subunits cytochrome b (MT-CYB), cytochrome c1 (CYC1-1 or CYC1-2) and Rieske protein (UCR1-1 or UCR1-2), 2 core protein subunits MPPalpha1 (or MPPalpha2) and MPPB, and 5 low-molecular weight protein subunits QCR7-1 (or QCR7-2), UCRQ-1 (or UCRQ-2), QCR9, UCRY and probably QCR6-1 (or QCR6-2). The complex exists as an obligatory dimer and forms supercomplexes (SCs) in the inner mitochondrial membrane with NADH-ubiquinone oxidoreductase (complex I, CI), resulting in different assemblies (supercomplexes SCI(1)III(2) and SCI(2)III(4)).

It is found in the mitochondrion inner membrane. Component of the ubiquinol-cytochrome c oxidoreductase, a multisubunit transmembrane complex that is part of the mitochondrial electron transport chain which drives oxidative phosphorylation. The respiratory chain contains 3 multisubunit complexes succinate dehydrogenase (complex II, CII), ubiquinol-cytochrome c oxidoreductase (cytochrome b-c1 complex, complex III, CIII) and cytochrome c oxidase (complex IV, CIV), that cooperate to transfer electrons derived from NADH and succinate to molecular oxygen, creating an electrochemical gradient over the inner membrane that drives transmembrane transport and the ATP synthase. The cytochrome b-c1 complex catalyzes electron transfer from ubiquinol to cytochrome c, linking this redox reaction to translocation of protons across the mitochondrial inner membrane, with protons being carried across the membrane as hydrogens on the quinol. In the process called Q cycle, 2 protons are consumed from the matrix, 4 protons are released into the intermembrane space and 2 electrons are passed to cytochrome c. This Arabidopsis thaliana (Mouse-ear cress) protein is Cytochrome b-c1 complex subunit 10, mitochondrial (UCRY).